The primary structure comprises 495 residues: Glutamyl-tRNA(Gln) amidotransferase subunit A (495 aa).

Residues lysine 78 and serine 158 each act as charge relay system in the active site. The active-site Acyl-ester intermediate is serine 182.

Belongs to the amidase family. GatA subfamily. Heterotrimer of A, B and C subunits.

The catalysed reaction is L-glutamyl-tRNA(Gln) + L-glutamine + ATP + H2O = L-glutaminyl-tRNA(Gln) + L-glutamate + ADP + phosphate + H(+). Functionally, allows the formation of correctly charged Gln-tRNA(Gln) through the transamidation of misacylated Glu-tRNA(Gln) in organisms which lack glutaminyl-tRNA synthetase. The reaction takes place in the presence of glutamine and ATP through an activated gamma-phospho-Glu-tRNA(Gln). The sequence is that of Glutamyl-tRNA(Gln) amidotransferase subunit A from Ruegeria sp. (strain TM1040) (Silicibacter sp.).